Reading from the N-terminus, the 1928-residue chain is MTGGQSCSSNMIVWIPDEKEVFVKGELMSTDINKNKFTGQEEQIGIVHPLDSTEVSNLVQVRISDVFPVNPSTFDKVENMSELTHLNEPSVLYNLEKRYDCDLIYTYSGLFLVAINPYHNLNLYSEDHINLYHNKHNRLSKSRLDENSHEKLPPHIFAIAEEAYENLLSEGKDQSILVTGESGAGKTENTKKILQYLASITSGSPSNIAPVSGSSIVESFEMKILQSNPILESFGNAQTVRNNNSSRFGKFIKIEFNEHGMINGAHIEWYLLEKSRIVHQNSKERNYHIFYQLLSGLDDSELKNLRLKSRNVKDYKILSNSNQDIIPGINDVENFKELLSALNIIGFSKDQIRWIFQVVAIILLIGNIEFVSDRAEQASFKNDVSAICSNLGVDEKDFQTAILRPRSKAGKEWVSQSKNSQQAKFILNALSRNLYERLFGYIVDMINKNLDHGSATLNYIGLLDIAGFEIFENNSFEQLCINYTNEKLQQFFNNHMFVLEQSEYLKENIQWDYIDYGKDLQLTIDLIESKGPPTGVLPLLDEEAVLPKSTDESFYSKLISTWDQNSSKFKRSRLKNGFILKHYAGDVEYTVEGWLSKNKDPLNDNLLSLLSSSQNDIISKLFQPEGEKSSSAGVEANISNQEVKKSARTSTFKTTSSRHREQQITLLNQLASTHPHFVRCIIPNNVKKVKTFNRRLILDQLRCNGVLEGIRLAREGYPNRIAFQEFFQRYRILYPENSTTTTFSSKLKASTKQNCEFLLTSLQLDTKVYKIGNTKLFFKAGVLADLEKQKDVKLNNIMIKLTATIRGYTVRKEITYHLQKLKKTRVIGNTFRLYNRLVKEDPWFNLFIRIKPLLTSSNDMTRTKKFNEQINKLKNDLQEMESKKKFLEEKNQKTVNELENTQDLLNQEKENLRKNESLLNRVKTSSETLQKQFDDLVSEKDEISREKLEVAQNLEEAHQKIQGLQETIREREATLEKLHSKNNELIKQISDLNCDISKEQSSQSLIKESKLKLENEIKRLKDVINSKEEEIKSFNDKLSSSEEDLDIKLVTLEKNCNIAMSRLQSLVTENSDLRSKNENFKKEKAALNNQLKNKESELLKMKEKIDNHKKELATFSKQRDDAVSEHGKITAELKETRIQLTEYKSNYQKIKEEYSNFQRETKEQEQKKRNSLVESLNDSKIKELEARLSQEISLNQYLNKRISGNSVETNISSTRRSTSYSDDPLDKEDIIKKYYDLQLAFTEITRNLENEIEEKKNLISRLRFTETRLASSSFEDQKIKAQMKKLKKLIQDMDPSIPLDSILNEPLDNCPDKESDINKLMLEVDYLKRQLDIETRAHYDAENAISALHSKFRKIQGESSLSSSDIYKLKFEASEERVKSLEDKLKTMPLRDRTNLPVGDIIKNRDSISKYEEEIRYYKLENYKLQEILNESNGKLSQLTLDLRQSKSKEALLSEQLDRLQKDLESTERQKELLSSTIKQQKQQFENCMDDLQGNELRLREHIHALKQAEEDVKNMASIIEKLKTQNKQKEKLIWEREMERNDSDMQLQETLLELKRVQDVKKILSDDLAHLKERLSAVEDRSQYTDEINRLKEELNCSLKAETNLKKEFATLKYKLETSTNDSEAKISDLLKQLDHYTKVVEMLNNEKDAISLAEKELYQKYEALNTECESLKGKIVSLTKIKQELESDLNQKTDALQISNAALSSSTQKNKEITEKIKYLEETLQLQMEQNSRNGELVKTLQASCNGYKDKFDDEKQKNIDLYEENQTLQKLNTDLQLQLKNLHERLSDTTEKNAWLSKIHELENMVSLETDLKYEEMKKNKSLERAVEELQTKNSQQTDVIELANKNRSEFEEATLKYEAQISDLEKYISQQELEMKKSIRDNSSYRDKVQEMAQEIEFWKSRYESTMIGSKNIDSNNAQSKIFS.

In terms of domain architecture, Myosin N-terminal SH3-like spans 8–71 (SSNMIVWIPD…RISDVFPVNP (64 aa)). Positions 75-791 (DKVENMSELT…VLADLEKQKD (717 aa)) constitute a Myosin motor domain. Residue 180–187 (GESGAGKT) coordinates ATP. Residues 460–529 (IGLLDIAGFE…LQLTIDLIES (70 aa)) form an actin-binding region. Residues 629 to 641 (SSSAGVEANISNQ) show a composition bias toward polar residues. Residues 629-657 (SSSAGVEANISNQEVKKSARTSTFKTTSS) form a disordered region. One can recognise an IQ domain in the interval 794–823 (LNNIMIKLTATIRGYTVRKEITYHLQKLKK). Residues 856–1911 (SSNDMTRTKK…FWKSRYESTM (1056 aa)) are a coiled coil.

The protein belongs to the TRAFAC class myosin-kinesin ATPase superfamily. Myosin family.

In terms of biological role, required for cell division. This Saccharomyces cerevisiae (strain ATCC 204508 / S288c) (Baker's yeast) protein is Myosin-1 (MYO1).